Consider the following 266-residue polypeptide: Probable catechol O-methyltransferase 1 (266 aa).

Residues isoleucine 56, glutamate 78, serine 86, glutamate 106, valine 107, alanine 135, and aspartate 162 each coordinate S-adenosyl-L-methionine. Aspartate 162 provides a ligand contact to Mg(2+). Residue lysine 165 participates in substrate binding. Residues aspartate 190 and asparagine 191 each contribute to the Mg(2+) site. Asparagine 191 provides a ligand contact to substrate.

Belongs to the class I-like SAM-binding methyltransferase superfamily. Cation-dependent O-methyltransferase family. The cofactor is Mg(2+).

The protein resides in the cytoplasm. It localises to the nucleus. The catalysed reaction is a catechol + S-adenosyl-L-methionine = a guaiacol + S-adenosyl-L-homocysteine + H(+). The protein is Probable catechol O-methyltransferase 1 of Schizosaccharomyces pombe (strain 972 / ATCC 24843) (Fission yeast).